The following is a 364-amino-acid chain: Phosphoserine aminotransferase (364 aa).

Residue Arg46 coordinates L-glutamate. Pyridoxal 5'-phosphate contacts are provided by residues 80–81 (AR), Trp106, Thr157, Asp176, and Gln199. Lys200 carries the N6-(pyridoxal phosphate)lysine modification. 241–242 (NT) lines the pyridoxal 5'-phosphate pocket.

Belongs to the class-V pyridoxal-phosphate-dependent aminotransferase family. SerC subfamily. Homodimer. It depends on pyridoxal 5'-phosphate as a cofactor.

It localises to the cytoplasm. The enzyme catalyses O-phospho-L-serine + 2-oxoglutarate = 3-phosphooxypyruvate + L-glutamate. The catalysed reaction is 4-(phosphooxy)-L-threonine + 2-oxoglutarate = (R)-3-hydroxy-2-oxo-4-phosphooxybutanoate + L-glutamate. The protein operates within amino-acid biosynthesis; L-serine biosynthesis; L-serine from 3-phospho-D-glycerate: step 2/3. It participates in cofactor biosynthesis; pyridoxine 5'-phosphate biosynthesis; pyridoxine 5'-phosphate from D-erythrose 4-phosphate: step 3/5. Its function is as follows. Catalyzes the reversible conversion of 3-phosphohydroxypyruvate to phosphoserine and of 3-hydroxy-2-oxo-4-phosphonooxybutanoate to phosphohydroxythreonine. This Vibrio vulnificus (strain CMCP6) protein is Phosphoserine aminotransferase.